A 63-amino-acid chain; its full sequence is Beta-defensin 4 (63 aa).

The first 22 residues, 1-22, serve as a signal peptide directing secretion; it reads MRIHYLLFTFLLVLLSPLAAFT. Position 23 is a pyrrolidone carboxylic acid (Gln23). 3 cysteine pairs are disulfide-bonded: Cys31-Cys59, Cys38-Cys52, and Cys42-Cys60.

This sequence belongs to the beta-defensin family. Tongue, esophagus and trachea.

Its subcellular location is the secreted. In terms of biological role, exhibits antimicrobial activity against Gram-negative bacteria and Gram-positive bacteria. May act as a ligand for C-C chemokine receptor CCR6. Can bind to mouse (but not human) CCR6 and induce chemotactic activity of CCR6-expressing cells. The chain is Beta-defensin 4 (Defb4) from Mus musculus (Mouse).